Here is a 118-residue protein sequence, read N- to C-terminus: Ribosome-binding factor A (118 aa).

Belongs to the RbfA family. As to quaternary structure, monomer. Binds 30S ribosomal subunits, but not 50S ribosomal subunits or 70S ribosomes.

It localises to the cytoplasm. Its function is as follows. One of several proteins that assist in the late maturation steps of the functional core of the 30S ribosomal subunit. Associates with free 30S ribosomal subunits (but not with 30S subunits that are part of 70S ribosomes or polysomes). Required for efficient processing of 16S rRNA. May interact with the 5'-terminal helix region of 16S rRNA. In Clostridium beijerinckii (strain ATCC 51743 / NCIMB 8052) (Clostridium acetobutylicum), this protein is Ribosome-binding factor A.